Here is a 964-residue protein sequence, read N- to C-terminus: Cycloisomaltooligosaccharide glucanotransferase (964 aa).

Residues 1 to 30 form the signal peptide; it reads MRVKILPLVFMTLLLIVPSQMLLPSGQANA. CBM6 domains lie at 413 to 538 and 740 to 863; these read DRYE…LTLG and NMYE…LKLD.

The protein belongs to the glycosyl hydrolase 66 family.

It catalyses the reaction cyclizes part of a (1-&gt;6)-alpha-D-glucan chain by formation of a (1-&gt;6)-alpha-D-glucosidic bond.. In terms of biological role, produces cycloisomaltooligosaccharide from dextran. The polypeptide is Cycloisomaltooligosaccharide glucanotransferase (cit) (Niallia circulans (Bacillus circulans)).